Here is a 92-residue protein sequence, read N- to C-terminus: Small ribosomal subunit protein uS17 (92 aa).

It belongs to the universal ribosomal protein uS17 family. As to quaternary structure, part of the 30S ribosomal subunit.

In terms of biological role, one of the primary rRNA binding proteins, it binds specifically to the 5'-end of 16S ribosomal RNA. In Corynebacterium glutamicum (strain ATCC 13032 / DSM 20300 / JCM 1318 / BCRC 11384 / CCUG 27702 / LMG 3730 / NBRC 12168 / NCIMB 10025 / NRRL B-2784 / 534), this protein is Small ribosomal subunit protein uS17.